A 319-amino-acid polypeptide reads, in one-letter code: Cytochrome c biogenesis protein CcsA (319 aa).

8 helical membrane passes run 14–34, 36–56, 69–89, 97–117, 142–162, 227–247, 254–274, and 288–308; these read AFGG…FPGI, GLNR…TLTL, SNLY…HLFI, LIGA…SLAL, IMML…LFLI, TIGL…VWAN, WSWD…AAYL, and AILA…VNFL.

Belongs to the CcmF/CycK/Ccl1/NrfE/CcsA family. In terms of assembly, may interact with Ccs1.

Its subcellular location is the plastid. The protein localises to the chloroplast thylakoid membrane. Its function is as follows. Required during biogenesis of c-type cytochromes (cytochrome c6 and cytochrome f) at the step of heme attachment. The sequence is that of Cytochrome c biogenesis protein CcsA from Pyropia yezoensis (Susabi-nori).